The chain runs to 141 residues: Hemoglobin subunit alpha (141 aa).

A Globin domain is found at 1-141 (VLSASDKTNL…VSTVLTSKYR (141 aa)). Ser3 is subject to Phosphoserine. The residue at position 7 (Lys7) is an N6-succinyllysine. Thr8 bears the Phosphothreonine mark. The residue at position 11 (Lys11) is an N6-succinyllysine. Lys16 bears the N6-acetyllysine; alternate mark. Position 16 is an N6-succinyllysine; alternate (Lys16). Residue Tyr24 is modified to Phosphotyrosine. Ser35 is subject to Phosphoserine. An N6-succinyllysine modification is found at Lys40. Phosphoserine is present on Ser49. His58 contributes to the O2 binding site. His87 serves as a coordination point for heme b. At Ser102 the chain carries Phosphoserine. Residue Thr108 is modified to Phosphothreonine. Phosphoserine is present on Ser124. A phosphothreonine mark is found at Thr134 and Thr137. Ser138 is modified (phosphoserine).

Belongs to the globin family. As to quaternary structure, heterotetramer of two alpha chains and two beta chains. Red blood cells.

Functionally, involved in oxygen transport from the lung to the various peripheral tissues. The sequence is that of Hemoglobin subunit alpha from Blarina brevicauda (Northern short-tailed shrew).